The following is a 261-amino-acid chain: tRNA pseudouridine synthase A (261 aa).

Catalysis depends on aspartate 51, which acts as the Nucleophile. Tyrosine 109 serves as a coordination point for substrate.

The protein belongs to the tRNA pseudouridine synthase TruA family. Homodimer.

It carries out the reaction uridine(38/39/40) in tRNA = pseudouridine(38/39/40) in tRNA. Formation of pseudouridine at positions 38, 39 and 40 in the anticodon stem and loop of transfer RNAs. The sequence is that of tRNA pseudouridine synthase A from Shewanella sp. (strain W3-18-1).